Consider the following 111-residue polypeptide: Nucleoid-associated protein PFL_1905 (111 aa).

Disordered stretches follow at residues Met1–Ala20 and Ser88–Phe111.

The protein belongs to the YbaB/EbfC family. As to quaternary structure, homodimer.

It is found in the cytoplasm. It localises to the nucleoid. Functionally, binds to DNA and alters its conformation. May be involved in regulation of gene expression, nucleoid organization and DNA protection. This chain is Nucleoid-associated protein PFL_1905, found in Pseudomonas fluorescens (strain ATCC BAA-477 / NRRL B-23932 / Pf-5).